The primary structure comprises 340 residues: tRNA (cytosine(34)-C(5))-methyltransferase, mitochondrial (340 aa).

Residues 139 to 145 (CAAPGGK), glutamate 162, aspartate 193, and aspartate 211 each bind S-adenosyl-L-methionine. Residue cysteine 265 is the Nucleophile of the active site.

Belongs to the class I-like SAM-binding methyltransferase superfamily. RsmB/NOP family.

Its subcellular location is the mitochondrion matrix. It carries out the reaction cytidine(34) in mitochondrial tRNA + S-adenosyl-L-methionine = 5-methylcytidine(34) in mitochondrial tRNA + S-adenosyl-L-homocysteine + H(+). Mitochondrial tRNA methyltransferase that mediates methylation of cytosine to 5-methylcytosine (m5C) at position 34 of mt-tRNA(Met). mt-tRNA(Met) methylation at cytosine(34) takes place at the wobble position of the anticodon and initiates the formation of 5-formylcytosine (f(5)c) at this position. mt-tRNA(Met) containing the f(5)c modification at the wobble position enables recognition of the AUA codon in addition to the AUG codon, expanding codon recognition in mitochondrial translation. This is tRNA (cytosine(34)-C(5))-methyltransferase, mitochondrial from Homo sapiens (Human).